The following is a 168-amino-acid chain: Large ribosomal subunit protein uL10 (168 aa).

This sequence belongs to the universal ribosomal protein uL10 family. Part of the ribosomal stalk of the 50S ribosomal subunit. The N-terminus interacts with L11 and the large rRNA to form the base of the stalk. The C-terminus forms an elongated spine to which L12 dimers bind in a sequential fashion forming a multimeric L10(L12)X complex.

Forms part of the ribosomal stalk, playing a central role in the interaction of the ribosome with GTP-bound translation factors. In Laribacter hongkongensis (strain HLHK9), this protein is Large ribosomal subunit protein uL10.